We begin with the raw amino-acid sequence, 839 residues long: Dynein axonemal assembly factor 5 (839 aa).

11 HEAT repeats span residues 10–48 (TSDV…DEKL), 54–92 (QHVF…HVPR), 94–137 (EEAL…VCGK), 140–178 (APYL…CIPE), 181–219 (HMQA…YSSG), 221–257 (SVDD…KLQD), 259–297 (YSFF…QWEK), 578–617 (GETL…KASE), 675–713 (LQVE…TCER), 717–755 (PDKL…CITD), and 723–761 (IYPE…ERTT).

This sequence belongs to the DNAAF5 family. As to quaternary structure, interacts with DNAI2; probably involved in outer arm dynein assembly.

It localises to the cytoplasm. It is found in the dynein axonemal particle. In terms of biological role, cytoplasmic protein involved in the delivery of the dynein machinery to the motile cilium. It is required for the assembly of the axonemal dynein inner and outer arms, two structures attached to the peripheral outer doublet A microtubule of the axoneme, that play a crucial role in cilium motility. This is Dynein axonemal assembly factor 5 from Xenopus laevis (African clawed frog).